A 319-amino-acid polypeptide reads, in one-letter code: Glycine--tRNA ligase alpha subunit (319 aa).

This sequence belongs to the class-II aminoacyl-tRNA synthetase family. As to quaternary structure, tetramer of two alpha and two beta subunits.

The protein resides in the cytoplasm. The catalysed reaction is tRNA(Gly) + glycine + ATP = glycyl-tRNA(Gly) + AMP + diphosphate. The sequence is that of Glycine--tRNA ligase alpha subunit from Coxiella burnetii (strain CbuK_Q154) (Coxiella burnetii (strain Q154)).